Reading from the N-terminus, the 720-residue chain is MSENKCPVMHGSATTTENSMANMNWWPKSLSLDILHQHDHKTNPMAADFNYQDEVKKLDFVALKNDLHALMTDSQAWWPADWGHYGGLMIRLTWHAAGTYRIADGRGGAGHGSQRFAPLNSWPDNGNLDKARRLLWPIKKKYGNKLSWADLIAYAGTIAYESMGLKTFGFAFGREDIWHPEKDIYWGAEKDWLLPTDNDNSRYSGERNLENPLAAVMMGLIYVNPEGVDGKPDPLKTAQDIRETFARMAMNDEETVALTAGGHTVGKAHGNGNADLLGPEPEDADIHDQGFGWLNKAKRGIGRDTVTSGIEGAWTTHPTQWDNGYFTMLLNHEWELCKSPAGAWQWQPINIKEEDKPRDVEDPSISTMPMMTDADMAMKMDPEYRKISEHFHRDPEYFSKVFSRAWFKLTHRDMGPKVRYLGPDVPVEDLLWQDPVPTGPKDFNVAVVKKAIKETGLSISDMVTTAWDSARTFRGSDKRGGANGARIRLALQKQWAGNEPKRLASVLSVLEPIAASHGVSVADVIVLAGNLGIELAAKKAGFDVTVPFISGRGDATDEMTDNESFAVLEPLHDGYRNWLKQDFAVSAEELMLDRTQLMGLTAHEMTVLVGGMRVIGTNYAETGHGVFTERKGALTNDFFVNLTDMNYIWKPIGQNEYEICERETGKRKWTASRVDLIFGSNSVLRSYAEVYAQDDNKQKFVNDFISAWTKMMNADRFDVS.

An N-terminal signal peptide occupies residues 1-21 (MSENKCPVMHGSATTTENSMA). The tryptophyl-tyrosyl-methioninium (Trp-Tyr) (with M-248) cross-link spans 94–222 (WHAAGTYRIA…LAAVMMGLIY (129 aa)). H95 acts as the Proton acceptor in catalysis. The tryptophyl-tyrosyl-methioninium (Tyr-Met) (with W-94) cross-link spans 222–248 (YVNPEGVDGKPDPLKTAQDIRETFARM). H263 contacts heme b.

Belongs to the peroxidase family. Peroxidase/catalase subfamily. As to quaternary structure, homodimer or homotetramer. Heme b serves as cofactor. Formation of the three residue Trp-Tyr-Met cross-link is important for the catalase, but not the peroxidase activity of the enzyme.

The catalysed reaction is H2O2 + AH2 = A + 2 H2O. It carries out the reaction 2 H2O2 = O2 + 2 H2O. Functionally, bifunctional enzyme with both catalase and broad-spectrum peroxidase activity. This Shewanella denitrificans (strain OS217 / ATCC BAA-1090 / DSM 15013) protein is Catalase-peroxidase.